We begin with the raw amino-acid sequence, 64 residues long: MKGEFLTARDIQKILGVKQAKSYDIIRTLNAQMKEEGYMVIQGKVSRAKFEECYCYKGPKSQTG.

Required for the excision of the integrative and conjugative element ICEBs1. Excision of ICEBs1 requires two sites, attL and attR, at the left and right ends of the integrated ICEBs1. This is ICEBs1 excisionase (xis) from Bacillus subtilis (strain 168).